The chain runs to 68 residues: MAKGKDARVIVLLECTSCVRNGFNKQKKPSGVSRYITQRNRHNTPGRLELRKFCPYCHKHTIHGEIKK.

The protein belongs to the bacterial ribosomal protein bL33 family.

The protein localises to the plastid. The protein resides in the chloroplast. The polypeptide is Large ribosomal subunit protein bL33c (Piper cenocladum (Ant piper)).